Reading from the N-terminus, the 99-residue chain is MALTLTDVKRIAHLARLEMADADAEHMLGQLNELFGLVEQMQAVDTAGIAPLAHPIEQIQEVAQRLREDAVTEVVNRDDNQRPAPAVQDGLYLVPKVIE.

The protein belongs to the GatC family. As to quaternary structure, heterotrimer of A, B and C subunits.

The catalysed reaction is L-glutamyl-tRNA(Gln) + L-glutamine + ATP + H2O = L-glutaminyl-tRNA(Gln) + L-glutamate + ADP + phosphate + H(+). The enzyme catalyses L-aspartyl-tRNA(Asn) + L-glutamine + ATP + H2O = L-asparaginyl-tRNA(Asn) + L-glutamate + ADP + phosphate + 2 H(+). Its function is as follows. Allows the formation of correctly charged Asn-tRNA(Asn) or Gln-tRNA(Gln) through the transamidation of misacylated Asp-tRNA(Asn) or Glu-tRNA(Gln) in organisms which lack either or both of asparaginyl-tRNA or glutaminyl-tRNA synthetases. The reaction takes place in the presence of glutamine and ATP through an activated phospho-Asp-tRNA(Asn) or phospho-Glu-tRNA(Gln). The polypeptide is Aspartyl/glutamyl-tRNA(Asn/Gln) amidotransferase subunit C (Burkholderia lata (strain ATCC 17760 / DSM 23089 / LMG 22485 / NCIMB 9086 / R18194 / 383)).